The primary structure comprises 450 residues: Malate:quinone oxidoreductase (450 aa).

The protein belongs to the MQO family. FAD is required as a cofactor.

The protein resides in the cell membrane. The catalysed reaction is (S)-malate + a quinone = a quinol + oxaloacetate. The protein operates within carbohydrate metabolism; tricarboxylic acid cycle; oxaloacetate from (S)-malate (quinone route): step 1/1. Catalyzes oxidation of malate to oxaloacetate in the citric acid cycle. Donates electrons to quinones of the electron transfer chain. This Helicobacter pylori (strain J99 / ATCC 700824) (Campylobacter pylori J99) protein is Malate:quinone oxidoreductase (mqo).